The following is a 481-amino-acid chain: Argininosuccinate lyase (481 aa).

The segment covering 1–17 has biased composition (polar residues); it reads MKNAPVDTQSDAATSFE. The interval 1–25 is disordered; that stretch reads MKNAPVDTQSDAATSFEGTAANPQW.

Belongs to the lyase 1 family. Argininosuccinate lyase subfamily.

Its subcellular location is the cytoplasm. It catalyses the reaction 2-(N(omega)-L-arginino)succinate = fumarate + L-arginine. It participates in amino-acid biosynthesis; L-arginine biosynthesis; L-arginine from L-ornithine and carbamoyl phosphate: step 3/3. This chain is Argininosuccinate lyase, found in Gluconobacter oxydans (strain 621H) (Gluconobacter suboxydans).